A 500-amino-acid chain; its full sequence is Lysine--tRNA ligase (500 aa).

E410 and E417 together coordinate Mg(2+).

The protein belongs to the class-II aminoacyl-tRNA synthetase family. As to quaternary structure, homodimer. The cofactor is Mg(2+).

The protein resides in the cytoplasm. The catalysed reaction is tRNA(Lys) + L-lysine + ATP = L-lysyl-tRNA(Lys) + AMP + diphosphate. The sequence is that of Lysine--tRNA ligase from Pseudomonas savastanoi pv. phaseolicola (strain 1448A / Race 6) (Pseudomonas syringae pv. phaseolicola (strain 1448A / Race 6)).